A 572-amino-acid polypeptide reads, in one-letter code: Dihydroxy-acid dehydratase (572 aa).

Cysteine 57 contributes to the [2Fe-2S] cluster binding site. Position 89 (aspartate 89) interacts with Mg(2+). Cysteine 130 lines the [2Fe-2S] cluster pocket. Positions 131 and 132 each coordinate Mg(2+). Lysine 132 is modified (N6-carboxylysine). Cysteine 202 contributes to the [2Fe-2S] cluster binding site. Glutamate 453 serves as a coordination point for Mg(2+). Serine 479 functions as the Proton acceptor in the catalytic mechanism.

The protein belongs to the IlvD/Edd family. Homodimer. [2Fe-2S] cluster is required as a cofactor. Requires Mg(2+) as cofactor.

It carries out the reaction (2R)-2,3-dihydroxy-3-methylbutanoate = 3-methyl-2-oxobutanoate + H2O. It catalyses the reaction (2R,3R)-2,3-dihydroxy-3-methylpentanoate = (S)-3-methyl-2-oxopentanoate + H2O. It participates in amino-acid biosynthesis; L-isoleucine biosynthesis; L-isoleucine from 2-oxobutanoate: step 3/4. Its pathway is amino-acid biosynthesis; L-valine biosynthesis; L-valine from pyruvate: step 3/4. Functions in the biosynthesis of branched-chain amino acids. Catalyzes the dehydration of (2R,3R)-2,3-dihydroxy-3-methylpentanoate (2,3-dihydroxy-3-methylvalerate) into 2-oxo-3-methylpentanoate (2-oxo-3-methylvalerate) and of (2R)-2,3-dihydroxy-3-methylbutanoate (2,3-dihydroxyisovalerate) into 2-oxo-3-methylbutanoate (2-oxoisovalerate), the penultimate precursor to L-isoleucine and L-valine, respectively. The chain is Dihydroxy-acid dehydratase from Streptococcus sanguinis (strain SK36).